A 1211-amino-acid polypeptide reads, in one-letter code: DNA-directed RNA polymerase subunit beta' (1211 aa).

The Zn(2+) site is built by C60, C62, C75, and C78. Mg(2+)-binding residues include D450, D452, and D454. Zn(2+) contacts are provided by C819, C893, C900, and C903.

Belongs to the RNA polymerase beta' chain family. In terms of assembly, the RNAP catalytic core consists of 2 alpha, 1 beta, 1 beta' and 1 omega subunit. When a sigma factor is associated with the core the holoenzyme is formed, which can initiate transcription. It depends on Mg(2+) as a cofactor. Zn(2+) serves as cofactor.

The catalysed reaction is RNA(n) + a ribonucleoside 5'-triphosphate = RNA(n+1) + diphosphate. DNA-dependent RNA polymerase catalyzes the transcription of DNA into RNA using the four ribonucleoside triphosphates as substrates. The sequence is that of DNA-directed RNA polymerase subunit beta' from Streptococcus equi subsp. equi (strain 4047).